The chain runs to 734 residues: DNA ligase (734 aa).

Residues 42 to 46 (DAEYD), 91 to 92 (SL), and Glu-125 each bind NAD(+). Lys-127 (N6-AMP-lysine intermediate) is an active-site residue. Residues Arg-148, Glu-185, Lys-301, and Lys-325 each contribute to the NAD(+) site. Positions 430, 433, 454, and 460 each coordinate Zn(2+). The 80-residue stretch at 655–734 (SADSEVAGKT…DTWLQRVGKA (80 aa)) folds into the BRCT domain.

It belongs to the NAD-dependent DNA ligase family. LigA subfamily. Requires Mg(2+) as cofactor. Mn(2+) is required as a cofactor.

The catalysed reaction is NAD(+) + (deoxyribonucleotide)n-3'-hydroxyl + 5'-phospho-(deoxyribonucleotide)m = (deoxyribonucleotide)n+m + AMP + beta-nicotinamide D-nucleotide.. DNA ligase that catalyzes the formation of phosphodiester linkages between 5'-phosphoryl and 3'-hydroxyl groups in double-stranded DNA using NAD as a coenzyme and as the energy source for the reaction. It is essential for DNA replication and repair of damaged DNA. In Mesorhizobium japonicum (strain LMG 29417 / CECT 9101 / MAFF 303099) (Mesorhizobium loti (strain MAFF 303099)), this protein is DNA ligase.